The sequence spans 339 residues: Heat-inducible transcription repressor HrcA (339 aa).

This sequence belongs to the HrcA family.

In terms of biological role, negative regulator of class I heat shock genes (grpE-dnaK-dnaJ and groELS operons). Prevents heat-shock induction of these operons. The chain is Heat-inducible transcription repressor HrcA from Clostridium perfringens (strain 13 / Type A).